Consider the following 823-residue polypeptide: Valine--tRNA ligase (823 aa).

Lysine 547 serves as a coordination point for ATP.

It belongs to the class-I aminoacyl-tRNA synthetase family. ValS type 2 subfamily.

The protein localises to the cytoplasm. It carries out the reaction tRNA(Val) + L-valine + ATP = L-valyl-tRNA(Val) + AMP + diphosphate. Its function is as follows. Catalyzes the attachment of valine to tRNA(Val). As ValRS can inadvertently accommodate and process structurally similar amino acids such as threonine, to avoid such errors, it has a 'posttransfer' editing activity that hydrolyzes mischarged Thr-tRNA(Val) in a tRNA-dependent manner. The sequence is that of Valine--tRNA ligase (valS) from Aeropyrum pernix (strain ATCC 700893 / DSM 11879 / JCM 9820 / NBRC 100138 / K1).